We begin with the raw amino-acid sequence, 301 residues long: Porin (301 aa).

In terms of assembly, homotrimer.

Its subcellular location is the cell outer membrane. Forms channels that allow the passive diffusion of small hydrophilic solutes up to an exclusion limit of about 0.6 kDa. The chain is Porin from Rhodobacter capsulatus (Rhodopseudomonas capsulata).